The sequence spans 474 residues: Glutamine synthetase (474 aa).

Residues 14-99 (EKIELIDLKF…VCSIKEPRTG (86 aa)) form the GS beta-grasp domain. Residues 106–474 (PRVIAQKAID…PYEFSIYYDV (369 aa)) form the GS catalytic domain. Positions 131 and 133 each coordinate Mg(2+). Glu211 provides a ligand contact to ATP. Residues Glu216 and Glu224 each contribute to the Mg(2+) site. Residues 268–269 (NG) and Gly269 each bind L-glutamate. His273 serves as a coordination point for Mg(2+). ATP is bound by residues 275–277 (HQS) and Ser277. Residues Arg325, Glu331, and Arg343 each contribute to the L-glutamate site. ATP contacts are provided by Arg343, Arg348, and Lys357. Position 362 (Glu362) interacts with Mg(2+). An L-glutamate-binding site is contributed by Arg364. Tyr402 bears the O-AMP-tyrosine mark.

This sequence belongs to the glutamine synthetase family. As to quaternary structure, oligomer of 12 subunits arranged in the form of two hexagons. It depends on Mg(2+) as a cofactor.

The protein localises to the cytoplasm. The catalysed reaction is L-glutamate + NH4(+) + ATP = L-glutamine + ADP + phosphate + H(+). The activity of this enzyme could be controlled by adenylation under conditions of abundant glutamine. Functionally, involved in nitrogen metabolism via ammonium assimilation. Catalyzes the ATP-dependent biosynthesis of glutamine from glutamate and ammonia. This chain is Glutamine synthetase, found in Nostoc sp. (strain PCC 7120 / SAG 25.82 / UTEX 2576).